We begin with the raw amino-acid sequence, 649 residues long: Sodium/nucleoside cotransporter 1 (649 aa).

Residues 1–80 lie on the Cytoplasmic side of the membrane; the sequence is MENDPSRRRE…ARSFCREHMQ (80 aa). A helical membrane pass occupies residues 81 to 104; it reads LFRWIGTGLLCTGLSAFLLVACLL. Topologically, residues 105–109 are extracellular; the sequence is DFQRA. A helical transmembrane segment spans residues 110–128; sequence LALFVLTCVVLTFLGHRLL. Residues 129–147 are Cytoplasmic-facing; it reads KRLLGPKLRRFLKPQGHPR. Residues 148 to 167 traverse the membrane as a helical segment; it reads LLLWFKRGLALAAFLGLVLW. The Extracellular portion of the chain corresponds to 168–178; sequence LSLDTSQRPEQ. Residues 179–195 traverse the membrane as a helical segment; sequence LVSFAGICVFVALLFAC. At 196–201 the chain is on the cytoplasmic side; the sequence is SKHHCA. Residues 202–222 form a helical membrane-spanning segment; it reads VSWRAVSWGLGLQFVLGLLVI. Over 223-261 the chain is Extracellular; the sequence is RTEPGFIAFEWLGEQIRIFLSYTKAGSSFVFGEALVKDV. The chain crosses the membrane as a helical span at residues 262-283; it reads FAFQVLPIIVFFSCVISVLYHV. The Cytoplasmic portion of the chain corresponds to 284–294; the sequence is GLMQWVILKIA. A helical transmembrane segment spans residues 295-318; it reads WLMQVTMGTTATETLSVAGNIFVS. Residues 319-337 are Extracellular-facing; the sequence is QTEAPLLIRPYLADMTLSE. The chain crosses the membrane as a helical span at residues 338–360; that stretch reads VHVVMTGGYATIAGSLLGAYISF. Residues 361 to 366 lie on the Cytoplasmic side of the membrane; the sequence is GIDATS. A helical membrane pass occupies residues 367-386; the sequence is LIAASVMAAPCALALSKLVY. Topologically, residues 387 to 423 are extracellular; the sequence is PEVEESKFRREEGVKLTYGDAQNLIEAASTGAAISVK. Residues 424 to 446 traverse the membrane as a helical segment; sequence VVANIAANLIAFLAVLDFINAAL. Residues 447–457 lie on the Cytoplasmic side of the membrane; it reads SWLGDMVDIQG. The chain crosses the membrane as a helical span at residues 458–479; the sequence is LSFQLICSYILRPVAFLMGVAW. The Extracellular portion of the chain corresponds to 480–534; that stretch reads EDCPVVAELLGIKLFLNEFVAYQDLSKYKQRRLAGAEEWVGDRKQWISVRAEVLT. A helical transmembrane segment spans residues 535–558; that stretch reads TFALCGFANFSSIGIMLGGLTSMV. The Cytoplasmic segment spans residues 559–569; it reads PQRKSDFSQIV. Residues 570–592 traverse the membrane as a helical segment; sequence LRALFTGACVSLVNACMAGILYM. Residues 593 to 649 lie on the Extracellular side of the membrane; sequence PRGAEVDCMSLLNTTLSSSSFEIYQCCREAFQSVNPEFSPEALDNCCRFYNHTICAQ. N605 and N643 each carry an N-linked (GlcNAc...) asparagine glycan.

The protein belongs to the concentrative nucleoside transporter (CNT) (TC 2.A.41) family. N-glycosylated. N-glycosylation is required for localization to the plasma membrane and the transporter activity. In terms of tissue distribution, expressed in kidney.

The protein localises to the cell membrane. It is found in the apical cell membrane. The catalysed reaction is uridine(out) + Na(+)(out) = uridine(in) + Na(+)(in). It catalyses the reaction thymidine(out) + Na(+)(out) = thymidine(in) + Na(+)(in). It carries out the reaction cytidine(out) + Na(+)(out) = cytidine(in) + Na(+)(in). The enzyme catalyses adenosine(out) + Na(+)(out) = adenosine(in) + Na(+)(in). With respect to regulation, due to its high apparent affinity but slow transport, adenosine could act as a negative regulator of pyrimidine transport under some conditions. Sodium and pyrimidine nucleoside symporter of the plasma membrane that imports uridine, thymidine and cytidine into cells by coupling their transport to the transmembrane sodium electrochemical gradient. Also transports adenosine, an atypical substrate transported with high apparent affinity, but low maximum velocity. Therefore, exhibits the transport characteristics of the nucleoside transport system cit or N2 subtype (N2/cit). Involved in renal nucleoside (re)absorption. The sequence is that of Sodium/nucleoside cotransporter 1 from Homo sapiens (Human).